The primary structure comprises 558 residues: uncharacterized protein (558 aa).

The next 12 helical transmembrane spans lie at 21-41 (IFCFYIYCILFGSLLLFLPIA), 69-89 (FLDALFLSTSAFSDTGLSTVV), 100-120 (IVLAVLLQLGGIGFVVIAFLA), 160-180 (IIFLFIVELIYGFLYGILFYF), 220-240 (AFQAGFFHSLSAVNNAGIDLI), 251-271 (GLGIIIQWLTISQIIFGGIGY), 303-323 (VITNIVVILLFFTLLLMVEFI), 386-406 (VFPVASEIQTTKIIIALAMFI), 413-433 (TAGGIRTTTLAVIFLALVAKF), 454-474 (AFLVLIISLIAVLLTAVLLPL), 479-499 (PVSFIDALFETTSAFGTVGLS), and 519-539 (ALCLLMVMGQVGVSSSVLTFV).

This sequence belongs to the TrkH potassium transport family.

It localises to the cell membrane. This is an uncharacterized protein from Mycoplasma genitalium (strain ATCC 33530 / DSM 19775 / NCTC 10195 / G37) (Mycoplasmoides genitalium).